Consider the following 417-residue polypeptide: Carboxypeptidase A2 (417 aa).

Residues 1-16 (MRLTLLLAALLGYIYC) form the signal peptide. A propeptide spans 17-112 (QETFVGDQVL…EMLFNQQRER (96 aa)) (activation peptide). In terms of domain architecture, Peptidase M14 spans 120 to 412 (AYHTLEEIYQ…LGLKTIMEHV (293 aa)). Histidine 177 and glutamate 180 together coordinate Zn(2+). Residues 177 to 180 (HARE), arginine 235, and 252 to 253 (NR) each bind substrate. A disulfide bridge links cysteine 246 with cysteine 269. Histidine 304 serves as a coordination point for Zn(2+). 305–306 (SY) contacts substrate. The cysteines at positions 318 and 352 are disulfide-linked. A substrate-binding site is contributed by tyrosine 356. The Proton donor/acceptor role is filled by glutamate 378.

Belongs to the peptidase M14 family. It depends on Zn(2+) as a cofactor.

It localises to the secreted. The catalysed reaction is Similar to that of carboxypeptidase A (EC 3.4.17.1), but with a preference for bulkier C-terminal residues.. Carboxypeptidase that catalyzes the release of a C-terminal amino acid, with a preference for large aromatic C-terminal residues. This chain is Carboxypeptidase A2 (Cpa2), found in Rattus norvegicus (Rat).